We begin with the raw amino-acid sequence, 468 residues long: GTPase Der (468 aa).

EngA-type G domains follow at residues 3-167 and 179-352; these read PTLV…PYAE and PVIA…TAAM. Residues 9-16, 56-60, 119-122, 185-192, 232-236, and 297-300 each bind GTP; these read GRPNVGKS, DTGGF, NKAE, DTAGL, and NKWD. One can recognise a KH-like domain in the interval 353–437; it reads AHIPTPKLTR…PLRVEFRTGH (85 aa). Residues 434–468 are disordered; that stretch reads RTGHNPYAGKKAPPLTEEEARRAHSRRRRNRKKYG. Residues 456–468 are compositionally biased toward basic residues; the sequence is AHSRRRRNRKKYG.

The protein belongs to the TRAFAC class TrmE-Era-EngA-EngB-Septin-like GTPase superfamily. EngA (Der) GTPase family. In terms of assembly, associates with the 50S ribosomal subunit.

Functionally, GTPase that plays an essential role in the late steps of ribosome biogenesis. The protein is GTPase Der of Nitrosomonas eutropha (strain DSM 101675 / C91 / Nm57).